The sequence spans 472 residues: MKAETPSFEAHQFVRVRRGDAVRRLIQRDKTPLAVLFMAAVVGTLAGLVGVAFEKSVNWVQNQRIGALAQVADHWYLVWPLAFILSALLAMVGYFLVRRFAPEAGGSGIPEIEGALEELRPVRWWRVLPVKFVGGMGTLGAGMVLGREGPMVQLGGNIGRMVLDVFRMRSPEARHTLLATGAASGLSAAFNAPLAGILFIIEEMRPQFRYNLISIKAVFTGVIMSSIVFRIFNGEAAIIEVGKLSNAPVNTLWLYLVLGMLFGCFGPLFNFLVLRTQDLFQRIHGGNIKKWVLIGGLIGGLCGLLGLMQPSAVGGGFNLIPIAAAGNFSVGLLLFIFIARVVTTLICFSSGAPGGIFAPMLALGTLLGTAFGMAAIPLFPAYHLDAGTFAIAGMGALLAASVRAPLTGIVLVLEMTDNYQLILPMIITCLGATLLAQFLGGKPLYSTILQRTLAKQEAEQAAKAQQAPRENT.

Topologically, residues 1–32 are cytoplasmic; that stretch reads MKAETPSFEAHQFVRVRRGDAVRRLIQRDKTP. Residues 33–69 traverse the membrane as a helical segment; that stretch reads LAVLFMAAVVGTLAGLVGVAFEKSVNWVQNQRIGALA. Over 70–76 the chain is Periplasmic; sequence QVADHWY. Residues 77–100 traverse the membrane as a helical segment; that stretch reads LVWPLAFILSALLAMVGYFLVRRF. A Selectivity filter part_1 motif is present at residues 106–110; sequence GSGIP. Ser107 is a chloride binding site. Positions 109-116 form an intramembrane region, helical; the sequence is IPEIEGAL. Over 117-123 the chain is Cytoplasmic; sequence EELRPVR. A run of 2 helical transmembrane segments spans residues 124 to 141 and 148 to 166; these read WWRVLPVKFVGGMGTLGA and EGPMVQLGGNIGRMVLDVF. The Selectivity filter part_2 motif lies at 146-150; the sequence is GREGP. At 167–176 the chain is on the cytoplasmic side; sequence RMRSPEARHT. Intramembrane regions (helical) lie at residues 177 to 189 and 193 to 201; these read LLATGAASGLSAA and PLAGILFII. Over 202–214 the chain is Cytoplasmic; sequence EEMRPQFRYNLIS. A helical membrane pass occupies residues 215-232; it reads IKAVFTGVIMSSIVFRIF. Over 233–252 the chain is Periplasmic; that stretch reads NGEAAIIEVGKLSNAPVNTL. Residues 253–281 traverse the membrane as a helical segment; sequence WLYLVLGMLFGCFGPLFNFLVLRTQDLFQ. The Cytoplasmic segment spans residues 282–287; sequence RIHGGN. The chain crosses the membrane as a helical span at residues 288–309; it reads IKKWVLIGGLIGGLCGLLGLMQ. At 310–329 the chain is on the periplasmic side; that stretch reads PSAVGGGFNLIPIAAAGNFS. The next 2 helical transmembrane spans lie at 330–349 and 355–376; these read VGLLLFIFIARVVTTLICFS and GIFAPMLALGTLLGTAFGMAAI. The Selectivity filter part_3 motif lies at 355-359; that stretch reads GIFAP. Ile356 and Phe357 together coordinate chloride. Residues 377–386 lie on the Periplasmic side of the membrane; it reads PLFPAYHLDA. The helical intramembrane region spans 387 to 401; that stretch reads GTFAIAGMGALLAAS. The note=Loop between two helices intramembrane region spans 402-404; that stretch reads VRA. An intramembrane region (helical) is located at residues 405–416; that stretch reads PLTGIVLVLEMT. An intramembrane region (note=Loop between two helices) is located at residues 417–421; that stretch reads DNYQL. A helical membrane pass occupies residues 422-438; it reads ILPMIITCLGATLLAQF. The Cytoplasmic segment spans residues 439–472; that stretch reads LGGKPLYSTILQRTLAKQEAEQAAKAQQAPRENT. Position 445 (Tyr445) interacts with chloride.

The protein belongs to the chloride channel (TC 2.A.49) family. ClcA subfamily. As to quaternary structure, homodimer.

It is found in the cell inner membrane. The catalysed reaction is 2 chloride(in) + H(+)(out) = 2 chloride(out) + H(+)(in). Functionally, proton-coupled chloride transporter. Functions as antiport system and exchanges two chloride ions for 1 proton. Probably acts as an electrical shunt for an outwardly-directed proton pump that is linked to amino acid decarboxylation, as part of the extreme acid resistance (XAR) response. The sequence is that of H(+)/Cl(-) exchange transporter ClcA from Klebsiella pneumoniae subsp. pneumoniae (strain ATCC 700721 / MGH 78578).